The chain runs to 715 residues: SEC14-like protein 1 (715 aa).

A required for interaction and inhibitory function toward RIGI region spans residues 1 to 510; that stretch reads MVQKYQSPVR…VPKSLYRTAE (510 aa). The PRELI/MSF1 domain occupies 3-175; sequence QKYQSPVRVY…YLRQLEEEGI (173 aa). Residue Thr234 is modified to Phosphothreonine. Residues 319-495 enclose the CRAL-TRIO domain; the sequence is PPQVLLDYYA…FLSGECMCDV (177 aa). The region spanning 521–674 is the GOLD domain; it reads TETIYQSASV…KCKVMYYTEV (154 aa). At Ser586 the chain carries Phosphoserine.

As to quaternary structure, interacts with RIGI (via tandem CARD domain); the interaction is direct. Interacts (via GOLD domain) with SLC18A3; the interaction is direct. Interacts with SLC5A7 (via GOLD domain); the interaction is direct.

The protein localises to the cytoplasm. It is found in the golgi apparatus. May play a role in innate immunity by inhibiting the antiviral RIG-I signaling pathway. In this pathway, functions as a negative regulator of RIGI, the cytoplasmic sensor of viral nucleic acids. Prevents the interaction of RIGI with MAVS/IPS1, an important step in signal propagation. May also regulate the SLC18A3 and SLC5A7 cholinergic transporters. The polypeptide is SEC14-like protein 1 (Mus musculus (Mouse)).